Consider the following 338-residue polypeptide: Anthranilate phosphoribosyltransferase (338 aa).

5-phospho-alpha-D-ribose 1-diphosphate-binding positions include G78, 81–82 (GD), S86, 88–91 (NIST), 106–114 (KHGNKSVTS), and S118. G78 contacts anthranilate. S90 contributes to the Mg(2+) binding site. N109 is a binding site for anthranilate. R163 contacts anthranilate. Residues D222 and E223 each coordinate Mg(2+).

It belongs to the anthranilate phosphoribosyltransferase family. As to quaternary structure, homodimer. Requires Mg(2+) as cofactor.

It catalyses the reaction N-(5-phospho-beta-D-ribosyl)anthranilate + diphosphate = 5-phospho-alpha-D-ribose 1-diphosphate + anthranilate. It functions in the pathway amino-acid biosynthesis; L-tryptophan biosynthesis; L-tryptophan from chorismate: step 2/5. In terms of biological role, catalyzes the transfer of the phosphoribosyl group of 5-phosphorylribose-1-pyrophosphate (PRPP) to anthranilate to yield N-(5'-phosphoribosyl)-anthranilate (PRA). The sequence is that of Anthranilate phosphoribosyltransferase from Staphylococcus saprophyticus subsp. saprophyticus (strain ATCC 15305 / DSM 20229 / NCIMB 8711 / NCTC 7292 / S-41).